A 237-amino-acid polypeptide reads, in one-letter code: E3 ubiquitin-protein ligase RNF166 (237 aa).

Residues 33–73 (CPICLEVYHRPVAIGSCGHTFCGECLQPCLQVPSPLCPLCR) form an RING-type zinc finger. Residues C98, C101, H113, and C117 each contribute to the Zn(2+) site. The segment at 98-117 (CRGCNKKVTLAKMRAHISSC) adopts a C2HC RNF-type zinc-finger fold. Residues 221-237 (DEEAAFQAALALSLSEN) form the UIM domain.

Its subcellular location is the cytoplasm. The catalysed reaction is S-ubiquitinyl-[E2 ubiquitin-conjugating enzyme]-L-cysteine + [acceptor protein]-L-lysine = [E2 ubiquitin-conjugating enzyme]-L-cysteine + N(6)-ubiquitinyl-[acceptor protein]-L-lysine.. It participates in protein modification; protein ubiquitination. Its function is as follows. E3 ubiquitin-protein ligase that promotes the ubiquitination of different substrates. In turn, participates in different biological processes including interferon production or autophagy. Plays a role in the activation of RNA virus-induced interferon-beta production by promoting the ubiquitination of TRAF3 and TRAF6. Also plays a role in the early recruitment of autophagy adapters to bacteria. Mediates 'Lys-29' and 'Lys-33'-linked ubiquitination of SQSTM1 leading to xenophagic targeting of bacteria and inhibition of their replication. The sequence is that of E3 ubiquitin-protein ligase RNF166 (Rnf166) from Mus musculus (Mouse).